The chain runs to 78 residues: Probable [Fe-S]-dependent transcriptional repressor (78 aa).

Positions 56, 61, 64, and 70 each coordinate iron-sulfur cluster.

Belongs to the FeoC family.

In terms of biological role, may function as a transcriptional regulator that controls feoABC expression. The chain is Probable [Fe-S]-dependent transcriptional repressor from Salmonella agona (strain SL483).